The primary structure comprises 158 residues: U4/U6.U5 small nuclear ribonucleoprotein 27 kDa protein (158 aa).

The segment at 1 to 102 is disordered; the sequence is MGRSRSRSPE…AEDLEGKTEE (102 aa). Residues 13–59 show a composition bias toward basic residues; it reads RERRRSRSASRERERRRRERSRSRERRRSRSRSPHRRRSRSPRRHRS. Positions 66–101 are enriched in basic and acidic residues; that stretch reads RLKDRRDDDKKEPKESKGGGSKERQLAAEDLEGKTE.

The protein belongs to the SNUT3 family. In terms of assembly, part of a tri-snRNP complex.

The protein resides in the nucleus. May play a role in mRNA splicing. The protein is U4/U6.U5 small nuclear ribonucleoprotein 27 kDa protein (snrnp27) of Xenopus laevis (African clawed frog).